The chain runs to 455 residues: Argininosuccinate lyase (455 aa).

Belongs to the lyase 1 family. Argininosuccinate lyase subfamily.

Its subcellular location is the cytoplasm. It carries out the reaction 2-(N(omega)-L-arginino)succinate = fumarate + L-arginine. It functions in the pathway amino-acid biosynthesis; L-arginine biosynthesis; L-arginine from L-ornithine and carbamoyl phosphate: step 3/3. The protein is Argininosuccinate lyase of Shewanella baltica (strain OS185).